We begin with the raw amino-acid sequence, 282 residues long: NAD(P)H-hydrate epimerase (282 aa).

Residues 1–53 (MSGLRTLLGLGLLVAGSRLPRVISQQSVCRARPIWWGTQRRGSETMAGAAVKY) constitute a mitochondrion transit peptide. A Phosphoserine; by PKA modification is found at Ser-43. One can recognise a YjeF N-terminal domain in the interval 59 to 269 (AQAVDQELFN…ALEKKYQLNL (211 aa)). 113-117 (NNGGD) contributes to the (6S)-NADPHX binding site. Asn-114 is a K(+) binding site. Lys-138 carries the N6-succinyllysine modification. Asp-179 lines the K(+) pocket. Residues 183–189 (GFSFKGD) and Asp-212 each bind (6S)-NADPHX. Ser-215 contacts K(+).

This sequence belongs to the NnrE/AIBP family. In terms of assembly, homodimer. Interacts with APOA1 and APOA2. Requires K(+) as cofactor. Post-translationally, undergoes physiological phosphorylation during sperm capacitation, downstream to PKA activation. In terms of tissue distribution, detected in testis and sperm (at protein level). Expressed at high levels in heart, liver, kidney, and testis.

The protein resides in the mitochondrion. Its subcellular location is the secreted. The catalysed reaction is (6R)-NADHX = (6S)-NADHX. The enzyme catalyses (6R)-NADPHX = (6S)-NADPHX. Functionally, catalyzes the epimerization of the S- and R-forms of NAD(P)HX, a damaged form of NAD(P)H that is a result of enzymatic or heat-dependent hydration. This is a prerequisite for the S-specific NAD(P)H-hydrate dehydratase to allow the repair of both epimers of NAD(P)HX. Accelerates cholesterol efflux from endothelial cells to high-density lipoprotein (HDL) and thereby regulates angiogenesis. This chain is NAD(P)H-hydrate epimerase, found in Mus musculus (Mouse).